The chain runs to 380 residues: 5-amino-6-(D-ribitylamino)uracil--L-tyrosine 4-hydroxyphenyl transferase (380 aa).

A Radical SAM core domain is found at 56 to 303 (VTYIINRNIN…GAVARIYLGN (248 aa)). Residues cysteine 70, cysteine 74, and cysteine 77 each contribute to the [4Fe-4S] cluster site.

This sequence belongs to the radical SAM superfamily. CofH family. In terms of assembly, consists of two subunits, CofG and CofH. [4Fe-4S] cluster is required as a cofactor.

It carries out the reaction 5-amino-6-(D-ribitylamino)uracil + L-tyrosine + S-adenosyl-L-methionine = 5-amino-5-(4-hydroxybenzyl)-6-(D-ribitylimino)-5,6-dihydrouracil + 2-iminoacetate + 5'-deoxyadenosine + L-methionine + H(+). It functions in the pathway cofactor biosynthesis; coenzyme F0 biosynthesis. In terms of biological role, catalyzes the radical-mediated synthesis of 5-amino-5-(4-hydroxybenzyl)-6-(D-ribitylimino)-5,6-dihydrouracil from 5-amino-6-(D-ribitylamino)uracil and L-tyrosine. The polypeptide is 5-amino-6-(D-ribitylamino)uracil--L-tyrosine 4-hydroxyphenyl transferase (Nostoc punctiforme (strain ATCC 29133 / PCC 73102)).